We begin with the raw amino-acid sequence, 142 residues long: Large ribosomal subunit protein uL13 (142 aa).

Belongs to the universal ribosomal protein uL13 family. Part of the 50S ribosomal subunit.

This protein is one of the early assembly proteins of the 50S ribosomal subunit, although it is not seen to bind rRNA by itself. It is important during the early stages of 50S assembly. This is Large ribosomal subunit protein uL13 from Polaromonas sp. (strain JS666 / ATCC BAA-500).